Consider the following 226-residue polypeptide: UPF0758 protein LL1007 (226 aa).

Residues 103-225 (QVLSSREYGL…YFSFREEEIR (123 aa)) enclose the MPN domain. Zn(2+)-binding residues include His-174, His-176, and Asp-187. A JAMM motif motif is present at residues 174–187 (HNHPSGNLKPSQAD).

This sequence belongs to the UPF0758 family.

This is UPF0758 protein LL1007 from Lactococcus lactis subsp. lactis (strain IL1403) (Streptococcus lactis).